The primary structure comprises 131 residues: Small ribosomal subunit protein bS6 (131 aa).

The disordered stretch occupies residues 98–131 (EASPMVKAKDERRERREDFANETADDSEAGDSEE). Residues 104 to 116 (KAKDERRERREDF) are compositionally biased toward basic and acidic residues. Over residues 120–131 (TADDSEAGDSEE) the composition is skewed to acidic residues.

It belongs to the bacterial ribosomal protein bS6 family.

In terms of biological role, binds together with bS18 to 16S ribosomal RNA. The sequence is that of Small ribosomal subunit protein bS6 from Klebsiella pneumoniae (strain 342).